The sequence spans 216 residues: Nucleolar protein 12 (216 aa).

Residues 33 to 97 (GFHKRKVERK…LVTAKTESVQ (65 aa)) are a coiled coil. The disordered stretch occupies residues 120-216 (LLGLPLPEQG…MTGKARHNGE (97 aa)). The span at 129 to 140 (GDQDGSQEEEVS) shows a compositional bias: acidic residues. 2 stretches are compositionally biased toward basic residues: residues 171–183 (AHSR…KHPR) and 200–216 (KTQR…HNGE).

It belongs to the RRP17 family. Interacts with KIAA1191.

The protein resides in the nucleus. The protein localises to the nucleolus. It localises to the cytoplasm. In terms of biological role, multifunctional RNA binding protein that plays a role in RNA metabolism and DNA maintenance. Participates in the resolution of DNA stress and the maintenance of genome integrity by localizing to sites of DNA insults. Also plays a role in proper nucleolar organization by limiting nucleolar size and regulating nucleolar number. Mechanistically, regulates the nucleolar levels of fibrillarin and nucleolin, two key players in pre-rRNA processing and ribosome assembly. This is Nucleolar protein 12 (Nol12) from Rattus norvegicus (Rat).